The sequence spans 368 residues: Probable magnesium transporter NIPA3 (368 aa).

Over 1-18 (MASLSGSWRDAYKGMSSD) the chain is Extracellular. Residues 19-39 (NIKGLVLALSSSLFIGASFIV) traverse the membrane as a helical segment. At 40–66 (KKKGLKRAGASGLRAGSGGYSYLLEPL) the chain is on the cytoplasmic side. The chain crosses the membrane as a helical span at residues 67 to 87 (WWVGMITMIVGEIANFAAYAF). Residues 88–90 (APA) lie on the Extracellular side of the membrane. Residues 91-111 (ILVTPLGALSIIISAALAHVI) form a helical membrane-spanning segment. At 112-115 (LHEK) the chain is on the cytoplasmic side. Residues 116 to 136 (LHTFGLLGCVLCVVGSITIVL) form a helical membrane-spanning segment. The Extracellular segment spans residues 137–157 (HAPQEQEIDSVLQVWNLATEP). A helical transmembrane segment spans residues 158–178 (AFLLYAAAVVGAAIILIVQFV). At 179 to 189 (PQYGQSHVMVY) the chain is on the cytoplasmic side. A helical membrane pass occupies residues 190-210 (IGVCSLVGSLSVMSVKALGIA). Residues 211 to 220 (LKLTFSGMNQ) are Extracellular-facing. Residues 221–241 (LIYPQTWVFTLIVLTCVITQM) form a helical membrane-spanning segment. The Cytoplasmic segment spans residues 242 to 255 (NYLNKALDTFNTAV). The chain crosses the membrane as a helical span at residues 256 to 276 (VSPIYYVMFTSLTILASVIMF). Topologically, residues 277–283 (KDWDRQD) are extracellular. The helical transmembrane segment at 284–304 (GTQIVTELCGFVTILSGTFLL) threads the bilayer. The Cytoplasmic segment spans residues 305–368 (HKTKDMVDGS…ILPQDGPEAV (64 aa)).

The protein belongs to the NIPA (TC 2.A.7) family. As to quaternary structure, homodimer.

It is found in the cell membrane. The protein localises to the early endosome. Functionally, acts as a Mg(2+) transporter. Can also transport other divalent cations such as Fe(2+), Sr(2+), Ba(2+), Mn(2+) and Co(2+) but to a much less extent than Mg(2+). The chain is Probable magnesium transporter NIPA3 from Arabidopsis thaliana (Mouse-ear cress).